A 250-amino-acid chain; its full sequence is Glutamate racemase (250 aa).

Substrate-binding positions include 7-8 (DS) and 39-40 (YG). The Proton donor/acceptor role is filled by cysteine 70. 71-72 (NT) contributes to the substrate binding site. Residue cysteine 180 is the Proton donor/acceptor of the active site. Residue 181–182 (TH) coordinates substrate.

It belongs to the aspartate/glutamate racemases family.

It carries out the reaction L-glutamate = D-glutamate. Its pathway is cell wall biogenesis; peptidoglycan biosynthesis. Functionally, provides the (R)-glutamate required for cell wall biosynthesis. The polypeptide is Glutamate racemase (Campylobacter jejuni subsp. jejuni serotype O:2 (strain ATCC 700819 / NCTC 11168)).